Consider the following 347-residue polypeptide: 3-isopropylmalate dehydrogenase (347 aa).

Residue 76-87 (GPKWTDPNNRPE) participates in NAD(+) binding. 4 residues coordinate substrate: Arg-94, Arg-104, Arg-132, and Asp-217. The Mg(2+) site is built by Asp-217, Asp-241, and Asp-245. 275 to 287 (GSAPDIANEDKAN) contributes to the NAD(+) binding site.

Belongs to the isocitrate and isopropylmalate dehydrogenases family. LeuB type 1 subfamily. Homodimer. Mg(2+) is required as a cofactor. Requires Mn(2+) as cofactor.

It localises to the cytoplasm. It catalyses the reaction (2R,3S)-3-isopropylmalate + NAD(+) = 4-methyl-2-oxopentanoate + CO2 + NADH. Its pathway is amino-acid biosynthesis; L-leucine biosynthesis; L-leucine from 3-methyl-2-oxobutanoate: step 3/4. Catalyzes the oxidation of 3-carboxy-2-hydroxy-4-methylpentanoate (3-isopropylmalate) to 3-carboxy-4-methyl-2-oxopentanoate. The product decarboxylates to 4-methyl-2 oxopentanoate. The sequence is that of 3-isopropylmalate dehydrogenase from Staphylococcus epidermidis (strain ATCC 12228 / FDA PCI 1200).